The sequence spans 188 residues: Peptidyl-tRNA hydrolase (188 aa).

Y15 lines the tRNA pocket. H20 acts as the Proton acceptor in catalysis. TRNA contacts are provided by F63, N65, and N111.

It belongs to the PTH family. Monomer.

It localises to the cytoplasm. It carries out the reaction an N-acyl-L-alpha-aminoacyl-tRNA + H2O = an N-acyl-L-amino acid + a tRNA + H(+). Hydrolyzes ribosome-free peptidyl-tRNAs (with 1 or more amino acids incorporated), which drop off the ribosome during protein synthesis, or as a result of ribosome stalling. Functionally, catalyzes the release of premature peptidyl moieties from peptidyl-tRNA molecules trapped in stalled 50S ribosomal subunits, and thus maintains levels of free tRNAs and 50S ribosomes. This Hydrogenobaculum sp. (strain Y04AAS1) protein is Peptidyl-tRNA hydrolase.